The sequence spans 500 residues: Putative antiporter subunit mnhD2 (500 aa).

14 helical membrane passes run 2–22, 32–52, 78–98, 108–128, 130–150, 161–181, 209–229, 240–260, 273–293, 308–328, 330–350, 368–388, 403–423, and 450–470; these read MSNL…ILVF, ILSI…LIYV, LSLL…AYGF, FHLP…FLTS, LFNL…LVTL, IVYV…IGML, ISLV…FMWL, LAAL…IRFF, TLLV…VIAY, IGFI…GAIF, LAND…LVYM, FFGV…PFSG, GNYI…YSLF, and GLLS…PVVL.

Belongs to the CPA3 antiporters (TC 2.A.63) subunit D family. As to quaternary structure, may form a heterooligomeric complex that consists of seven subunits: mnhA2, mnhB2, mnhC2, mnhD2, mnhE2, mnhF2 and mnhG2.

It is found in the cell membrane. In Staphylococcus epidermidis (strain ATCC 12228 / FDA PCI 1200), this protein is Putative antiporter subunit mnhD2 (mnhD2).